The sequence spans 224 residues: Small ribosomal subunit protein uS5 (224 aa).

Residues 1–40 form a disordered region; that stretch reads MAEQPAGGQGAGDSRDSRGDRDSRGRRGDGGRGGRDRDGD. Positions 13–40 are enriched in basic and acidic residues; that stretch reads DSRDSRGDRDSRGRRGDGGRGGRDRDGD. An S5 DRBM domain is found at 44–107; it reads YLERVVAINR…EEARKGFFRV (64 aa).

The protein belongs to the universal ribosomal protein uS5 family. Part of the 30S ribosomal subunit. Contacts proteins S4 and S8.

In terms of biological role, with S4 and S12 plays an important role in translational accuracy. Functionally, located at the back of the 30S subunit body where it stabilizes the conformation of the head with respect to the body. This is Small ribosomal subunit protein uS5 from Mycolicibacterium paratuberculosis (strain ATCC BAA-968 / K-10) (Mycobacterium paratuberculosis).